Reading from the N-terminus, the 121-residue chain is Acid shock protein (121 aa).

A signal peptide spans 1–21 (MKKVLALMVAATLGLSSVAFA). A propeptide spanning residues 22–63 (ADTTATATPAATSTTATVAAQTKATQHQKHKVTKKTTEQKAQ) is cleaved from the precursor. Residues 40–121 (AAQTKATQHQ…AKKPVAAPAA (82 aa)) form a disordered region. Over residues 74-83 (VQKAPVQKAQ) the composition is skewed to low complexity. The segment covering 84 to 93 (AAKKHVKKAS) has biased composition (basic residues). Low complexity predominate over residues 94–103 (VQKAPVQKAQ). Basic residues predominate over residues 104–113 (AAKKHHKTAK).

The protein belongs to the Asr family. Proteolytic processing gives rise to the active protein.

Its subcellular location is the periplasm. Functionally, required for growth and/or survival at acidic conditions. This is Acid shock protein from Yersinia pseudotuberculosis serotype O:1b (strain IP 31758).